The primary structure comprises 512 residues: D-alanine--D-alanyl carrier protein ligase (512 aa).

Thr152–Ser153 contacts ATP. Asp199 is a binding site for D-alanine. Residue Asn294–Thr299 participates in ATP binding. Val303 is a D-alanine binding site. Residues Asp385, Tyr397–Arg400, and Lys499 each bind ATP. Position 499 (Lys499) interacts with D-alanine.

It belongs to the ATP-dependent AMP-binding enzyme family. DltA subfamily.

The protein resides in the cytoplasm. The enzyme catalyses holo-[D-alanyl-carrier protein] + D-alanine + ATP = D-alanyl-[D-alanyl-carrier protein] + AMP + diphosphate. Its pathway is cell wall biogenesis; lipoteichoic acid biosynthesis. Catalyzes the first step in the D-alanylation of lipoteichoic acid (LTA), the activation of D-alanine and its transfer onto the D-alanyl carrier protein (Dcp) DltC. In an ATP-dependent two-step reaction, forms a high energy D-alanyl-AMP intermediate, followed by transfer of the D-alanyl residue as a thiol ester to the phosphopantheinyl prosthetic group of the Dcp. D-alanylation of LTA plays an important role in modulating the properties of the cell wall in Gram-positive bacteria, influencing the net charge of the cell wall. This is D-alanine--D-alanyl carrier protein ligase from Streptococcus pyogenes serotype M4 (strain MGAS10750).